The chain runs to 383 residues: Insulinoma-associated protein 1a (383 aa).

The tract at residues 1 to 20 is SNAG domain; that stretch reads MPRGFLVKRNKKATPVSYRV. Disordered stretches follow at residues 99 to 141 and 229 to 269; these read PVDL…AMRK and RWHK…SEDG. Polar residues predominate over residues 105 to 120; the sequence is GTSNSNRTGTTVTTKR. Over residues 130-140 the composition is skewed to basic residues; it reads KPASKKAKAMR. A C2H2-type 1 zinc finger spans residues 209–231; that stretch reads YRCPECDKLFSCPANLASHRRWH. Residues 244–256 are compositionally biased toward basic and acidic residues; it reads APEKEETSSDRDT. A C2H2-type 2; degenerate zinc finger spans residues 271-295; sequence YDCQHCGKKFKRQAYLKKHVTAHHD. C2H2-type zinc fingers lie at residues 314 to 337 and 342 to 365; these read HLCP…RLQH and YPCK…NKCH.

This sequence belongs to the INSM1 family.

The protein localises to the nucleus. Its function is as follows. May act as a transcriptional regulator. May play a role in neurogenesis and neuroendocrine cell differentiation during embryonic development. This chain is Insulinoma-associated protein 1a (insm1a), found in Danio rerio (Zebrafish).